Reading from the N-terminus, the 436-residue chain is Eukaryotic peptide chain release factor subunit 1 (436 aa).

The protein belongs to the eukaryotic release factor 1 family. In terms of assembly, heterodimer of two subunits, one of which binds GTP.

It localises to the cytoplasm. Functionally, directs the termination of nascent peptide synthesis (translation) in response to the termination codons UAA and UAG. In B.americanum UGA codes for tryptophan. This Blepharisma americanum (Ciliate) protein is Eukaryotic peptide chain release factor subunit 1 (eRF1).